Reading from the N-terminus, the 89-residue chain is Small ribosomal subunit protein uS14A (89 aa).

The disordered stretch occupies residues 34–54 (ESLRKLPRDSNPNRLKNRDKI).

This sequence belongs to the universal ribosomal protein uS14 family. As to quaternary structure, part of the 30S ribosomal subunit. Contacts proteins S3 and S10.

Binds 16S rRNA, required for the assembly of 30S particles and may also be responsible for determining the conformation of the 16S rRNA at the A site. This Streptococcus pyogenes serotype M1 protein is Small ribosomal subunit protein uS14A.